Consider the following 274-residue polypeptide: WIMGHMVNAIEQVDEFLNLGANAIEFDIDFDKDGIAQITHHGIPCDCGRKCTKKAIFTEYLDNIRQVTTPDDPKFREQLVLLALDLKLQRISSAKAYRAGEDVAKKLLDHYWQRGNSKARAYILLNIPLVEDYEFIRAFKDTLKNEGYESYNDKVGINFTGNEDLDKIRDVLEILGIHKQVWRADGITSCFARGTERLKEALKKRDTPGYNYINKVYAWTLVRKSIMRRSLRLGVDGVMSNNPDRVIKVLKEKEFADKFRLATYNDNPWEKFRG.

Residue H5 is part of the active site. Positions 25 and 27 each coordinate Mg(2+). Catalysis depends on H41, which acts as the Nucleophile. 2 disulfides stabilise this stretch: C45–C51 and C47–C190. D85 provides a ligand contact to Mg(2+).

This sequence belongs to the arthropod phospholipase D family. Class II subfamily. Requires Mg(2+) as cofactor. In terms of tissue distribution, expressed by the venom gland.

The protein resides in the secreted. It catalyses the reaction an N-(acyl)-sphingosylphosphocholine = an N-(acyl)-sphingosyl-1,3-cyclic phosphate + choline. The catalysed reaction is an N-(acyl)-sphingosylphosphoethanolamine = an N-(acyl)-sphingosyl-1,3-cyclic phosphate + ethanolamine. The enzyme catalyses a 1-acyl-sn-glycero-3-phosphocholine = a 1-acyl-sn-glycero-2,3-cyclic phosphate + choline. It carries out the reaction a 1-acyl-sn-glycero-3-phosphoethanolamine = a 1-acyl-sn-glycero-2,3-cyclic phosphate + ethanolamine. Dermonecrotic toxins cleave the phosphodiester linkage between the phosphate and headgroup of certain phospholipids (sphingolipid and lysolipid substrates), forming an alcohol (often choline) and a cyclic phosphate. This toxin acts on sphingomyelin (SM). It may also act on ceramide phosphoethanolamine (CPE), lysophosphatidylcholine (LPC) and lysophosphatidylethanolamine (LPE), but not on lysophosphatidylserine (LPS), and lysophosphatidylglycerol (LPG). It acts by transphosphatidylation, releasing exclusively cyclic phosphate products as second products. Induces dermonecrosis, hemolysis, increased vascular permeability, edema, inflammatory response, and platelet aggregation. This chain is Dermonecrotic toxin SdSicTox-betaIIB1ai, found in Sicarius cf. damarensis (strain GJB-2008) (Six-eyed sand spider).